The chain runs to 309 residues: Thermolabile glutaminase (309 aa).

7 residues coordinate substrate: serine 64, asparagine 114, glutamate 160, asparagine 167, tyrosine 191, tyrosine 243, and valine 261.

It belongs to the glutaminase family. In terms of assembly, homotetramer.

It carries out the reaction L-glutamine + H2O = L-glutamate + NH4(+). In Rhizobium etli (strain ATCC 51251 / DSM 11541 / JCM 21823 / NBRC 15573 / CFN 42), this protein is Thermolabile glutaminase (glsA).